Reading from the N-terminus, the 38-residue chain is Large ribosomal subunit protein bL36 (38 aa).

Belongs to the bacterial ribosomal protein bL36 family.

This is Large ribosomal subunit protein bL36 from Chloroherpeton thalassium (strain ATCC 35110 / GB-78).